A 157-amino-acid polypeptide reads, in one-letter code: Aspartate carbamoyltransferase regulatory chain (157 aa).

Zn(2+)-binding residues include cysteine 108, cysteine 113, cysteine 138, and cysteine 141.

It belongs to the PyrI family. As to quaternary structure, contains catalytic and regulatory chains. Requires Zn(2+) as cofactor.

Functionally, involved in allosteric regulation of aspartate carbamoyltransferase. In Ignicoccus hospitalis (strain KIN4/I / DSM 18386 / JCM 14125), this protein is Aspartate carbamoyltransferase regulatory chain.